Here is a 506-residue protein sequence, read N- to C-terminus: NADH-quinone oxidoreductase subunit N 2 (506 aa).

14 helical membrane passes run serine 11–tryptophan 31, leucine 44–alanine 64, phenylalanine 82–valine 102, serine 117–serine 137, leucine 140–phenylalanine 160, valine 175–isoleucine 195, valine 222–phenylalanine 242, proline 254–isoleucine 274, glycine 289–glycine 309, leucine 323–glycine 345, tyrosine 356–glycine 376, alanine 394–isoleucine 414, leucine 419–valine 439, and leucine 472–glycine 492.

This sequence belongs to the complex I subunit 2 family. NDH-1 is composed of 14 different subunits. Subunits NuoA, H, J, K, L, M, N constitute the membrane sector of the complex.

It localises to the cell inner membrane. It catalyses the reaction a quinone + NADH + 5 H(+)(in) = a quinol + NAD(+) + 4 H(+)(out). NDH-1 shuttles electrons from NADH, via FMN and iron-sulfur (Fe-S) centers, to quinones in the respiratory chain. The immediate electron acceptor for the enzyme in this species is believed to be ubiquinone. Couples the redox reaction to proton translocation (for every two electrons transferred, four hydrogen ions are translocated across the cytoplasmic membrane), and thus conserves the redox energy in a proton gradient. This chain is NADH-quinone oxidoreductase subunit N 2, found in Sorangium cellulosum (strain So ce56) (Polyangium cellulosum (strain So ce56)).